A 307-amino-acid polypeptide reads, in one-letter code: MLVEGSELQSGAQQPRTEAPQHGELQYLRQVEHIMRCGFKKEDRTGTGTLSVFGMQARYSLRDEFPLLTTKRVFWKGVLEELLWFIKGSTNAKELSSKGVRIWDANGSRDFLDSLGFSARQEGDLGPVYGFQWRHFGADYKDMDSDYSGQGVDQLQKVIDTIKTNPDDRRIIMCAWNPKDLPLMALPPCHALCQFYVVNGELSCQLYQRSGDMGLGVPFNIASYALLTYMIAHITGLQPGDFVHTLGDAHIYLNHIEPLKIQLQREPRPFPKLRILRKVETIDDFKVEDFQIEGYNPHPTIKMEMAV.

The segment at 1–22 (MLVEGSELQSGAQQPRTEAPQH) is disordered. The segment covering 7–16 (ELQSGAQQPR) has biased composition (polar residues). Residue Arg-44 coordinates dUMP. At Ser-108 the chain carries Phosphoserine. DUMP contacts are provided by residues 169–170 (RR), 189–190 (CH), 209–212 (RSGD), Asn-220, and 250–252 (HIY). The Nucleophile role is filled by Cys-189. Position 212 (Asp-212) interacts with (6R)-5,10-methylene-5,6,7,8-tetrahydrofolate. Glycyl lysine isopeptide (Lys-Gly) (interchain with G-Cter in SUMO2) cross-links involve residues Lys-286 and Lys-302. Ala-306 contacts (6R)-5,10-methylene-5,6,7,8-tetrahydrofolate.

The protein belongs to the thymidylate synthase family. Homodimer.

It localises to the nucleus. It is found in the cytoplasm. The protein localises to the mitochondrion. Its subcellular location is the mitochondrion matrix. The protein resides in the mitochondrion inner membrane. The catalysed reaction is dUMP + (6R)-5,10-methylene-5,6,7,8-tetrahydrofolate = 7,8-dihydrofolate + dTMP. The protein operates within pyrimidine metabolism; dTTP biosynthesis. In terms of biological role, catalyzes the reductive methylation of 2'-deoxyuridine 5'-monophosphate (dUMP) to thymidine 5'-monophosphate (dTMP), using the cosubstrate, 5,10- methylenetetrahydrofolate (CH2H4folate) as a 1-carbon donor and reductant and contributes to the de novo mitochondrial thymidylate biosynthesis pathway. In Rattus norvegicus (Rat), this protein is Thymidylate synthase (Tyms).